The following is a 289-amino-acid chain: ATP synthase subunit a (289 aa).

Helical transmembrane passes span 43–63 (AFHVDTLGWSVALGLIFVLIF), 101–121 (SAVIAPLALTIFVWVFLMNAV), 160–180 (LSVFALIIFYSIKVKGIGGFI), 193–213 (IFVQALLIPVNFLLEFVTLIA), 232–252 (VFILIAVMFGSGLLWLSGLGI), and 259–279 (AVFHILIITLQAFIFMMLTIV).

The protein belongs to the ATPase A chain family. In terms of assembly, F-type ATPases have 2 components, CF(1) - the catalytic core - and CF(0) - the membrane proton channel. CF(1) has five subunits: alpha(3), beta(3), gamma(1), delta(1), epsilon(1). CF(0) has three main subunits: a(1), b(2) and c(9-12). The alpha and beta chains form an alternating ring which encloses part of the gamma chain. CF(1) is attached to CF(0) by a central stalk formed by the gamma and epsilon chains, while a peripheral stalk is formed by the delta and b chains.

It is found in the cell inner membrane. Key component of the proton channel; it plays a direct role in the translocation of protons across the membrane. This is ATP synthase subunit a from Pseudomonas syringae pv. tomato (strain ATCC BAA-871 / DC3000).